The primary structure comprises 194 residues: Leucyl/phenylalanyl-tRNA--protein transferase (194 aa).

It belongs to the L/F-transferase family.

It is found in the cytoplasm. The catalysed reaction is N-terminal L-lysyl-[protein] + L-leucyl-tRNA(Leu) = N-terminal L-leucyl-L-lysyl-[protein] + tRNA(Leu) + H(+). The enzyme catalyses N-terminal L-arginyl-[protein] + L-leucyl-tRNA(Leu) = N-terminal L-leucyl-L-arginyl-[protein] + tRNA(Leu) + H(+). It carries out the reaction L-phenylalanyl-tRNA(Phe) + an N-terminal L-alpha-aminoacyl-[protein] = an N-terminal L-phenylalanyl-L-alpha-aminoacyl-[protein] + tRNA(Phe). In terms of biological role, functions in the N-end rule pathway of protein degradation where it conjugates Leu, Phe and, less efficiently, Met from aminoacyl-tRNAs to the N-termini of proteins containing an N-terminal arginine or lysine. In Chlorobium limicola (strain DSM 245 / NBRC 103803 / 6330), this protein is Leucyl/phenylalanyl-tRNA--protein transferase.